The primary structure comprises 371 residues: Protein SPATA31F3 (371 aa).

A helical membrane pass occupies residues 7–29 (ILWDVGSSVYTYGSLFIIALIIW). Residues 62-86 (LRVKKRTTKEETEKLQKLLSNMKRQ) adopt a coiled-coil conformation. 2 stretches are compositionally biased toward polar residues: residues 189–203 (LSKV…LSSQ) and 244–266 (PQQQ…SSSS). 3 disordered regions span residues 189-222 (LSKV…STDQ), 240-299 (YHPA…EAEM), and 326-371 (YKSE…KRNI). Phosphoserine occurs at positions 197 and 198. A compositionally biased stretch (basic residues) spans 277–287 (QKKRKKTKKLV). Residues 330 to 362 (TGAKPKTGEPKKSSAKVRAEEPNLEKHAKDLKA) are compositionally biased toward basic and acidic residues.

This sequence belongs to the SPATA31 family.

The protein resides in the membrane. The chain is Protein SPATA31F3 (Spata31f3) from Mus musculus (Mouse).